We begin with the raw amino-acid sequence, 109 residues long: Parvalbumin beta (109 aa).

EF-hand domains follow at residues 38 to 73 and 77 to 109; these read KSKD…FDGK and LTDK…VTKG. Ca(2+) contacts are provided by Asp-51, Asp-53, Ser-55, Tyr-57, Glu-59, Glu-62, Asp-90, Asp-92, Asp-94, Lys-96, and Glu-101.

It belongs to the parvalbumin family.

Its function is as follows. In muscle, parvalbumin is thought to be involved in relaxation after contraction. It binds two calcium ions. This Boa constrictor (Boa) protein is Parvalbumin beta.